The primary structure comprises 218 residues: Guanylate kinase (218 aa).

The 180-residue stretch at 15-194 (GMMLVLSSPS…SIADVRAILR (180 aa)) folds into the Guanylate kinase-like domain. 22 to 29 (SPSGAGKT) is a binding site for ATP.

The protein belongs to the guanylate kinase family.

The protein localises to the cytoplasm. The enzyme catalyses GMP + ATP = GDP + ADP. Essential for recycling GMP and indirectly, cGMP. This is Guanylate kinase from Rhodospirillum rubrum (strain ATCC 11170 / ATH 1.1.1 / DSM 467 / LMG 4362 / NCIMB 8255 / S1).